The following is a 568-amino-acid chain: Tetratricopeptide repeat protein 22 (568 aa).

TPR repeat units lie at residues 66 to 99, 101 to 133, 155 to 190, 203 to 237, 260 to 294, 296 to 328, and 432 to 465; these read PAVR…DPGN, NAWA…MGLE, YAHG…GQQI, ATLF…LGEV, KDTF…AKNQ, PILN…LTDP, and PELQ…DDEG.

In Mus musculus (Mouse), this protein is Tetratricopeptide repeat protein 22 (Ttc22).